The sequence spans 671 residues: UvrABC system protein C (671 aa).

The GIY-YIG domain maps to 16–95; the sequence is TTPGVYRFRD…IKEFKPRFNV (80 aa). Positions 207–242 constitute a UVR domain; it reads KRFISRLEKDMAAAVAELDYERAAGLRDDIIALRKV.

The protein belongs to the UvrC family. As to quaternary structure, interacts with UvrB in an incision complex.

It localises to the cytoplasm. Functionally, the UvrABC repair system catalyzes the recognition and processing of DNA lesions. UvrC both incises the 5' and 3' sides of the lesion. The N-terminal half is responsible for the 3' incision and the C-terminal half is responsible for the 5' incision. This chain is UvrABC system protein C, found in Paenarthrobacter aurescens (strain TC1).